A 371-amino-acid polypeptide reads, in one-letter code: Chaperone protein DnaJ (371 aa).

Positions 5–69 (DYYEVLGLSK…QKRAQYDQFG (65 aa)) constitute a J domain. The segment at 133-215 (GKELNVEIPV…CHGSGKVRKR (83 aa)) adopts a CR-type zinc-finger fold. 8 residues coordinate Zn(2+): Cys146, Cys149, Cys163, Cys166, Cys189, Cys192, Cys203, and Cys206. 4 CXXCXGXG motif repeats span residues 146 to 153 (CDTCKGSG), 163 to 170 (CKHCSGSG), 189 to 196 (CGHCSGTG), and 203 to 210 (CTTCHGSG).

Belongs to the DnaJ family. As to quaternary structure, homodimer. It depends on Zn(2+) as a cofactor.

The protein localises to the cytoplasm. Participates actively in the response to hyperosmotic and heat shock by preventing the aggregation of stress-denatured proteins and by disaggregating proteins, also in an autonomous, DnaK-independent fashion. Unfolded proteins bind initially to DnaJ; upon interaction with the DnaJ-bound protein, DnaK hydrolyzes its bound ATP, resulting in the formation of a stable complex. GrpE releases ADP from DnaK; ATP binding to DnaK triggers the release of the substrate protein, thus completing the reaction cycle. Several rounds of ATP-dependent interactions between DnaJ, DnaK and GrpE are required for fully efficient folding. Also involved, together with DnaK and GrpE, in the DNA replication of plasmids through activation of initiation proteins. The chain is Chaperone protein DnaJ from Bacillus cereus (strain ATCC 10987 / NRS 248).